A 193-amino-acid chain; its full sequence is AP-3 complex subunit sigma-2 (193 aa).

It belongs to the adaptor complexes small subunit family. As to quaternary structure, adaptor protein complex 3 (AP-3) is a heterotetramer composed of two large adaptins (delta-type subunit AP3D1 and beta-type subunit AP3B1 or AP3B2), a medium adaptin (mu-type subunit AP3M1 or AP3M2) and a small adaptin (sigma-type subunit APS1 or AP3S2). Interacts with AGAP1. AP-3 associates with the BLOC-1 complex. Present in all adult tissues examined.

The protein localises to the golgi apparatus. It localises to the cytoplasmic vesicle membrane. Functionally, part of the AP-3 complex, an adaptor-related complex which is not clathrin-associated. The complex is associated with the Golgi region as well as more peripheral structures. It facilitates the budding of vesicles from the Golgi membrane and may be directly involved in trafficking to lysosomes. In concert with the BLOC-1 complex, AP-3 is required to target cargos into vesicles assembled at cell bodies for delivery into neurites and nerve terminals. The polypeptide is AP-3 complex subunit sigma-2 (AP3S2) (Homo sapiens (Human)).